A 52-amino-acid chain; its full sequence is Large ribosomal subunit protein bL32c (52 aa).

It belongs to the bacterial ribosomal protein bL32 family.

It is found in the plastid. The protein localises to the chloroplast. This chain is Large ribosomal subunit protein bL32c, found in Morus indica (Mulberry).